The primary structure comprises 77 residues: Large ribosomal subunit protein bL28 (77 aa).

This sequence belongs to the bacterial ribosomal protein bL28 family.

This Polaromonas naphthalenivorans (strain CJ2) protein is Large ribosomal subunit protein bL28.